Consider the following 208-residue polypeptide: Ribosomal RNA large subunit methyltransferase E (208 aa).

Positions 62, 64, 82, 98, and 123 each coordinate S-adenosyl-L-methionine. Lys163 (proton acceptor) is an active-site residue.

It belongs to the class I-like SAM-binding methyltransferase superfamily. RNA methyltransferase RlmE family.

Its subcellular location is the cytoplasm. It carries out the reaction uridine(2552) in 23S rRNA + S-adenosyl-L-methionine = 2'-O-methyluridine(2552) in 23S rRNA + S-adenosyl-L-homocysteine + H(+). In terms of biological role, specifically methylates the uridine in position 2552 of 23S rRNA at the 2'-O position of the ribose in the fully assembled 50S ribosomal subunit. This is Ribosomal RNA large subunit methyltransferase E from Actinobacillus succinogenes (strain ATCC 55618 / DSM 22257 / CCUG 43843 / 130Z).